Consider the following 338-residue polypeptide: Anthranilate phosphoribosyltransferase (338 aa).

5-phospho-alpha-D-ribose 1-diphosphate-binding positions include glycine 81, 84-85 (GD), threonine 89, 91-94 (NVST), 109-117 (KHGNRSVSS), and serine 121. Residue glycine 81 coordinates anthranilate. Serine 93 is a Mg(2+) binding site. Anthranilate is bound at residue asparagine 112. Position 167 (arginine 167) interacts with anthranilate. Aspartate 226 and glutamate 227 together coordinate Mg(2+).

It belongs to the anthranilate phosphoribosyltransferase family. As to quaternary structure, homodimer. Requires Mg(2+) as cofactor.

It carries out the reaction N-(5-phospho-beta-D-ribosyl)anthranilate + diphosphate = 5-phospho-alpha-D-ribose 1-diphosphate + anthranilate. It functions in the pathway amino-acid biosynthesis; L-tryptophan biosynthesis; L-tryptophan from chorismate: step 2/5. Functionally, catalyzes the transfer of the phosphoribosyl group of 5-phosphorylribose-1-pyrophosphate (PRPP) to anthranilate to yield N-(5'-phosphoribosyl)-anthranilate (PRA). This chain is Anthranilate phosphoribosyltransferase, found in Alkalilimnicola ehrlichii (strain ATCC BAA-1101 / DSM 17681 / MLHE-1).